Here is a 286-residue protein sequence, read N- to C-terminus: Bifunctional protein FolD (286 aa).

NADP(+)-binding positions include 165–167, serine 190, and valine 231; that span reads GRS.

The protein belongs to the tetrahydrofolate dehydrogenase/cyclohydrolase family. As to quaternary structure, homodimer.

It catalyses the reaction (6R)-5,10-methylene-5,6,7,8-tetrahydrofolate + NADP(+) = (6R)-5,10-methenyltetrahydrofolate + NADPH. The catalysed reaction is (6R)-5,10-methenyltetrahydrofolate + H2O = (6R)-10-formyltetrahydrofolate + H(+). It participates in one-carbon metabolism; tetrahydrofolate interconversion. Catalyzes the oxidation of 5,10-methylenetetrahydrofolate to 5,10-methenyltetrahydrofolate and then the hydrolysis of 5,10-methenyltetrahydrofolate to 10-formyltetrahydrofolate. The chain is Bifunctional protein FolD from Bacillus cereus (strain ZK / E33L).